We begin with the raw amino-acid sequence, 340 residues long: Nuclear transcription factor Y subunit A-3 (340 aa).

Positions 43–116 are disordered; that stretch reads SLSLKVDSRP…KGFASNPKQG (74 aa). Residues 60-77 are compositionally biased toward low complexity; sequence QISFQDQDSSSTQSTGQS. Over residues 78 to 103 the composition is skewed to polar residues; it reads YTEVASSGDDNPSRQISFSAKSGSEI. The short motif at 182–205 is the Subunit association domain (SAD) element; sequence FVNAKQYHAIMRRRQQRAKLEAQN. Positions 212–237 form a DNA-binding region, NFYA/HAP2-type; it reads KPYLHESRHVHALKRPRGSGGRFLNT.

It belongs to the NFYA/HAP2 subunit family. Heterotrimeric transcription factor composed of three components, NF-YA, NF-YB and NF-YC. NF-YB and NF-YC must interact and dimerize for NF-YA association and DNA binding. As to expression, ubiquitous.

Its subcellular location is the nucleus. Its function is as follows. Stimulates the transcription of various genes by recognizing and binding to a CCAAT motif in promoters. This is Nuclear transcription factor Y subunit A-3 (NFYA3) from Arabidopsis thaliana (Mouse-ear cress).